The primary structure comprises 115 residues: uncharacterized protein (115 aa).

A signal peptide spans 1-24 (MLPLCLTFLSFFLSLGGSFKAVMT). The next 2 membrane-spanning stretches (helical) occupy residues 39-59 (FWIF…ALAI) and 93-113 (YLTS…FLLS).

The protein resides in the membrane. This is an uncharacterized protein from Saccharomyces cerevisiae (strain ATCC 204508 / S288c) (Baker's yeast).